Reading from the N-terminus, the 35-residue chain is U14-ctenitoxin-Pn1a (35 aa).

3 disulfide bridges follow: Cys-3–Cys-17, Cys-10–Cys-22, and Cys-16–Cys-32.

As to expression, expressed by the venom gland.

It localises to the secreted. In terms of biological role, neurotoxin. This is U14-ctenitoxin-Pn1a from Phoneutria nigriventer (Brazilian armed spider).